A 381-amino-acid chain; its full sequence is MSNPSPQVPEEEASTSVCRPKSSMASTSRRQRRERRFRRYLSAGRLVRAQALLQRHPGLDVDAGQPPPLHRACARHDAPALCLLLRLGADPAHQDRHGDTALHAAARQGPDAYTDFFLPLLSRCPSAMGIKNKDGETPGQILGWGPPWDSAEEEEEDDASKEREWRQKLQGELEDEWQEVMGRFEGDASHETQEPESFSAWSDRLAREHAQKCQQQQREAEGSRRPPRAEGSSQSWRQQEEEQRLFRERARAKEEELRESRARRAQEALGDREPKPTRAGPREEHPRGAGRGSLWRFGDVPWPCPGGGDPEAMAAALVARGPPLEEQGALRRYLRVQQVRWHPDRFLQRFRSQIETWELGRVMGAVTALSQALNRHAEALK.

Residues 1-34 (MSNPSPQVPEEEASTSVCRPKSSMASTSRRQRRE) are disordered. 2 ANK repeats span residues 64-93 (GQPP…DPAH) and 97-130 (HGDT…AMGI). Disordered regions lie at residues 129-167 (GIKN…EWRQ) and 186-294 (GDAS…RGSL). A Phosphoserine modification is found at Ser-150. The segment covering 150-159 (SAEEEEEDDA) has biased composition (acidic residues). Basic and acidic residues-rich tracts occupy residues 218-228 (REAEGSRRPPR) and 238-287 (QQEE…EHPR).

In terms of assembly, interacts with CACTIN (via N-terminal domain); the interaction occurs in a proinflammatory-independent manner. In terms of tissue distribution, detected in different cell types including monocytes, T-cells, B-cells and hepatocytes.

It localises to the nucleus. Functionally, involved in the regulation of innate immune response. Acts as negative regulator of Toll-like receptor and interferon-regulatory factor (IRF) signaling pathways. Contributes to the negative regulation of transcriptional activation of NF-kappa-B target genes in response to endogenous proinflammatory stimuli. The polypeptide is NF-kappa-B inhibitor-like protein 1 (NFKBIL1) (Homo sapiens (Human)).